The chain runs to 186 residues: Ribosome-recycling factor (186 aa).

Belongs to the RRF family.

It is found in the cytoplasm. Responsible for the release of ribosomes from messenger RNA at the termination of protein biosynthesis. May increase the efficiency of translation by recycling ribosomes from one round of translation to another. The protein is Ribosome-recycling factor of Burkholderia multivorans (strain ATCC 17616 / 249).